The following is a 142-amino-acid chain: Transcriptional regulator MraZ (142 aa).

2 consecutive SpoVT-AbrB domains span residues 5–47 and 76–119; these read EYQH…PLDE and ACEV…SKEK.

This sequence belongs to the MraZ family. Forms oligomers.

The protein resides in the cytoplasm. It is found in the nucleoid. The sequence is that of Transcriptional regulator MraZ from Clostridium beijerinckii (strain ATCC 51743 / NCIMB 8052) (Clostridium acetobutylicum).